Consider the following 147-residue polypeptide: Secreted RxLR effector protein BLN04 (147 aa).

The N-terminal stretch at 1-23 (MATMRRICFLFVFNLAVATSTQG) is a signal peptide. The short motif at 58–61 (SEER) is the dEER element. The chain crosses the membrane as a helical span at residues 117–137 (VYIYTILFLSIPIILGVAMYI).

This sequence belongs to the RxLR effector family. As to quaternary structure, interacts with host transcription factor NAC069.

Its subcellular location is the secreted. The protein resides in the host membrane. Secreted effector that inhibits stress-induced relocalization of the transcription factor NAC069 to the nucleus, thus affecting its broad role in abiotic and biotic stress responses. The protein is Secreted RxLR effector protein BLN04 of Bremia lactucae (Lettuce downy mildew).